A 257-amino-acid chain; its full sequence is MRHVPRKRFGQNFLRDPGVIQEIVAAVGPAPSDRLVEIGPGEGVLTRELLQSGACLEAIELDRDLVAALKRRFAGVGRLRIHEGDAMKFDLRTIATGERLRVVGNLPYNISTPLLFHLFDQIDVIEDMHFMLQKEVVDRLCAGAGDDHYGRLSVMAALYCQAQHLFDVGPECFHPQPKVVSAVVRLVPHAVPPDAGMVKQVSAVVVAAFGQRRKTLRNALKGLLDETAMVRAGIDPGARAEELSLADYVGLSRQLNP.

S-adenosyl-L-methionine-binding residues include Asn-12, Leu-14, Gly-39, Glu-60, Asp-85, and Asn-105.

Belongs to the class I-like SAM-binding methyltransferase superfamily. rRNA adenine N(6)-methyltransferase family. RsmA subfamily.

The protein resides in the cytoplasm. It catalyses the reaction adenosine(1518)/adenosine(1519) in 16S rRNA + 4 S-adenosyl-L-methionine = N(6)-dimethyladenosine(1518)/N(6)-dimethyladenosine(1519) in 16S rRNA + 4 S-adenosyl-L-homocysteine + 4 H(+). Functionally, specifically dimethylates two adjacent adenosines (A1518 and A1519) in the loop of a conserved hairpin near the 3'-end of 16S rRNA in the 30S particle. May play a critical role in biogenesis of 30S subunits. This is Ribosomal RNA small subunit methyltransferase A from Methylococcus capsulatus (strain ATCC 33009 / NCIMB 11132 / Bath).